Reading from the N-terminus, the 171-residue chain is Probable chemoreceptor glutamine deamidase CheD 1 (171 aa).

Positions 1-18 are enriched in low complexity; sequence MTRTTGAAPDRAAPAAGE. The segment at 1 to 23 is disordered; that stretch reads MTRTTGAAPDRAAPAAGETPGGG.

This sequence belongs to the CheD family.

The catalysed reaction is L-glutaminyl-[protein] + H2O = L-glutamyl-[protein] + NH4(+). Probably deamidates glutamine residues to glutamate on methyl-accepting chemotaxis receptors (MCPs), playing an important role in chemotaxis. The sequence is that of Probable chemoreceptor glutamine deamidase CheD 1 from Anaeromyxobacter dehalogenans (strain 2CP-C).